Here is a 296-residue protein sequence, read N- to C-terminus: Ribosomal RNA small subunit methyltransferase H (296 aa).

S-adenosyl-L-methionine is bound by residues 38–40 (GAH), glutamate 57, phenylalanine 88, aspartate 103, and histidine 110.

This sequence belongs to the methyltransferase superfamily. RsmH family.

Its subcellular location is the cytoplasm. It carries out the reaction cytidine(1402) in 16S rRNA + S-adenosyl-L-methionine = N(4)-methylcytidine(1402) in 16S rRNA + S-adenosyl-L-homocysteine + H(+). Functionally, specifically methylates the N4 position of cytidine in position 1402 (C1402) of 16S rRNA. This Borreliella afzelii (strain PKo) (Borrelia afzelii) protein is Ribosomal RNA small subunit methyltransferase H.